We begin with the raw amino-acid sequence, 229 residues long: Protein fmp52-2, mitochondrial (229 aa).

A mitochondrion-targeting transit peptide spans 1-45; the sequence is MTTAAVFGSTGAVGGQILATLLASDAFSSVKTVSRRLPNAQSPKL.

The protein belongs to the FMP52 family.

The protein resides in the mitochondrion outer membrane. This is Protein fmp52-2, mitochondrial (fmp522) from Aspergillus oryzae (strain ATCC 42149 / RIB 40) (Yellow koji mold).